Here is a 436-residue protein sequence, read N- to C-terminus: Chromosomal replication initiator protein DnaA (436 aa).

The tract at residues 1 to 80 (MSHEAVWQHV…QAPRFELRVV (80 aa)) is domain I, interacts with DnaA modulators. Positions 80 to 100 (VPGVVVQEDIFQAAPAEAPRP) are domain II. The segment at 101-317 (KLNPKYTFEN…GALMRAIAFA (217 aa)) is domain III, AAA+ region. Residues Gly145, Gly147, Lys148, and Thr149 each coordinate ATP. The tract at residues 318 to 436 (SLNGVELTRA…LLRTLREACT (119 aa)) is domain IV, binds dsDNA.

Belongs to the DnaA family. Oligomerizes as a right-handed, spiral filament on DNA at oriC.

It is found in the cytoplasm. It catalyses the reaction ATP + H2O = ADP + phosphate + H(+). Functionally, plays an essential role in the initiation and regulation of chromosomal replication. ATP-DnaA binds to the origin of replication (oriC) to initiate formation of the DNA replication initiation complex once per cell cycle. Binds the DnaA box (a 9 base pair repeat at the origin) and separates the double-stranded (ds)DNA. Forms a right-handed helical filament on oriC DNA; dsDNA binds to the exterior of the filament while single-stranded (ss)DNA is stabiized in the filament's interior. The ATP-DnaA-oriC complex binds and stabilizes one strand of the AT-rich DNA unwinding element (DUE), permitting loading of DNA polymerase. After initiation quickly degrades to an ADP-DnaA complex that is not apt for DNA replication. Binds acidic phospholipids. In terms of biological role, the DnaA box consensus is 5'-TTATC[CA]A[CA]A-3' in this bacterium; oriC consists of 13 clustered DnaA boxes and a 40 base pair AT-rich region. ATP-DnaA binds cooperatively to multiple DnaA boxes, while ADP-DnaA binds with low cooperativity to the individual DnaA boxes. About 16-18 DnaA protein molecules bind their sites in oriC. Has a slow ATPase activity. Binds linear and supercoiled DNA. This is Chromosomal replication initiator protein DnaA from Thermus thermophilus (strain ATCC 27634 / DSM 579 / HB8).